Reading from the N-terminus, the 265-residue chain is UPF0354 protein GWCH70_2742 (265 aa).

The protein belongs to the UPF0354 family.

In Geobacillus sp. (strain WCH70), this protein is UPF0354 protein GWCH70_2742.